The following is a 248-amino-acid chain: MTTAENRARLVLGNWKMHGNLAENAALLAELRAADAAAHCEMGVCVPFPYLAQTAAALQGSAIGWGAQDVSAHAKGAYTGEVAAPMLAEFGCRWVLVGHSERRTLHAESDQLVADKARAALEAGLTPVVCVGESLQEREGGNTLGVIERQLEPVLALGRDALVRMVLAYEPVWAIGTGRTASPEQAQEVHSAIRVALDGLQASQVRVLYGGSVKGANAASLFAMPDIDGGLVGGASLVAEEFLRIAAA.

Residue 14–16 (NWK) coordinates substrate. Residue His-99 is the Electrophile of the active site. Catalysis depends on Glu-170, which acts as the Proton acceptor. Residues Gly-176, Ser-212, and 233 to 234 (GG) contribute to the substrate site.

It belongs to the triosephosphate isomerase family. Homodimer.

It localises to the cytoplasm. The catalysed reaction is D-glyceraldehyde 3-phosphate = dihydroxyacetone phosphate. It functions in the pathway carbohydrate biosynthesis; gluconeogenesis. Its pathway is carbohydrate degradation; glycolysis; D-glyceraldehyde 3-phosphate from glycerone phosphate: step 1/1. Involved in the gluconeogenesis. Catalyzes stereospecifically the conversion of dihydroxyacetone phosphate (DHAP) to D-glyceraldehyde-3-phosphate (G3P). The protein is Triosephosphate isomerase of Bordetella bronchiseptica (strain ATCC BAA-588 / NCTC 13252 / RB50) (Alcaligenes bronchisepticus).